Reading from the N-terminus, the 280-residue chain is Large ribosomal subunit protein uL2 (280 aa).

The disordered stretch occupies residues 213-280 (RWKGKRPSVR…RRRTGKKHAR (68 aa)). Residues 268–280 (IVRRRRTGKKHAR) show a composition bias toward basic residues.

It belongs to the universal ribosomal protein uL2 family. In terms of assembly, part of the 50S ribosomal subunit. Forms a bridge to the 30S subunit in the 70S ribosome.

In terms of biological role, one of the primary rRNA binding proteins. Required for association of the 30S and 50S subunits to form the 70S ribosome, for tRNA binding and peptide bond formation. It has been suggested to have peptidyltransferase activity; this is somewhat controversial. Makes several contacts with the 16S rRNA in the 70S ribosome. This Mycobacterium leprae (strain Br4923) protein is Large ribosomal subunit protein uL2.